The primary structure comprises 363 residues: Trichocyst matrix protein T4-B (363 aa).

Residues Met1 to Ala17 form the signal peptide. Positions Arg18–Gly52 are excised as a propeptide. Positions Val85–Leu119 form a coiled coil. A propeptide spanning residues Arg190–Asp221 is cleaved from the precursor. The stretch at Ala244–Ala352 forms a coiled coil.

This sequence belongs to the TMP family. In terms of processing, two components are produced by post-translational processing from the precursor peptide.

It localises to the trichocyst. Structural protein that crystallize inside the trichocyst matrix. The protein is Trichocyst matrix protein T4-B (T4B) of Paramecium tetraurelia.